Here is a 590-residue protein sequence, read N- to C-terminus: Pescadillo homolog (590 aa).

Residues 332–422 (VCKSLFKDLK…IILPTEKYLV (91 aa)) enclose the BRCT domain. The tract at residues 561–590 (AMKISQSRKRSGVEIIEQRKKRLNDTQPSS) is disordered.

The protein belongs to the pescadillo family. As to quaternary structure, interacts with BOP1 and WDR12. Interacts with NSN1. Expressed in shoot and root apical meristems, epidermal cells and vasculature of developing leaves, trichome progenitor cells, young flowers, developing pollen grains and ovules, and mature pollen grains.

It localises to the nucleus. It is found in the nucleolus. Its subcellular location is the nucleoplasm. Required for maturation of ribosomal RNAs and formation of the large ribosomal subunit. Plays an essential role in cell growth and survival through its regulation of ribosome biogenesis and mitotic progression. Required for normal root cell growth and differentiation. This is Pescadillo homolog from Arabidopsis thaliana (Mouse-ear cress).